The sequence spans 266 residues: Ras-like protein family member 12 (266 aa).

Residues G27 to S34, D74 to L78, and N134 to D137 contribute to the GTP site.

Belongs to the small GTPase superfamily. Ras family.

It carries out the reaction GTP + H2O = GDP + phosphate + H(+). The sequence is that of Ras-like protein family member 12 (RASL12) from Bos taurus (Bovine).